Reading from the N-terminus, the 206-residue chain is MSERSVSKQDQEKRWYTVLAPEEFDRAELGETLAEEPDQVYDRTIQAALSDVRDGGDNNIKLTFQIDDVGSDSASTQFVQAELTRDYQRSLVRRGSSKVAVTVTVLTTDDYRVRIQPVAYTTKQADQSQQHAIRRTMIDLVEEAGEERTFEALLNSIIEGRLSSAIYDEANTIYPLRRVEVEKATLEAHPEEVHEEEETAVDFSGE.

The protein belongs to the eukaryotic ribosomal protein eS1 family.

In Halobacterium salinarum (strain ATCC 29341 / DSM 671 / R1), this protein is Small ribosomal subunit protein eS1.